Reading from the N-terminus, the 110-residue chain is Phosphoribosyl-ATP pyrophosphatase (110 aa).

The protein belongs to the PRA-PH family.

It localises to the cytoplasm. The enzyme catalyses 1-(5-phospho-beta-D-ribosyl)-ATP + H2O = 1-(5-phospho-beta-D-ribosyl)-5'-AMP + diphosphate + H(+). It functions in the pathway amino-acid biosynthesis; L-histidine biosynthesis; L-histidine from 5-phospho-alpha-D-ribose 1-diphosphate: step 2/9. In Pseudomonas savastanoi pv. phaseolicola (strain 1448A / Race 6) (Pseudomonas syringae pv. phaseolicola (strain 1448A / Race 6)), this protein is Phosphoribosyl-ATP pyrophosphatase.